A 461-amino-acid chain; its full sequence is Bifunctional protein GlmU (461 aa).

Residues 1–243 (MNATVPSAAP…EDELRGINSR (243 aa)) form a pyrophosphorylase region. UDP-N-acetyl-alpha-D-glucosamine-binding positions include 24–27 (LAAG), lysine 38, glutamine 86, 91–92 (GT), 112–114 (YGD), glycine 155, glutamate 169, asparagine 184, and asparagine 241. Aspartate 114 lines the Mg(2+) pocket. Position 241 (asparagine 241) interacts with Mg(2+). The tract at residues 244–264 (AELAEAEACVQRRLRAAALDG) is linker. The tract at residues 265–461 (GATLVAPETV…AALRRKKEQG (197 aa)) is N-acetyltransferase. Residues arginine 330 and lysine 348 each contribute to the UDP-N-acetyl-alpha-D-glucosamine site. The active-site Proton acceptor is the histidine 360. The UDP-N-acetyl-alpha-D-glucosamine site is built by tyrosine 363 and asparagine 374. Acetyl-CoA contacts are provided by residues alanine 377, 383–384 (NY), serine 402, alanine 420, and arginine 437.

In the N-terminal section; belongs to the N-acetylglucosamine-1-phosphate uridyltransferase family. The protein in the C-terminal section; belongs to the transferase hexapeptide repeat family. Homotrimer. The cofactor is Mg(2+).

Its subcellular location is the cytoplasm. It catalyses the reaction alpha-D-glucosamine 1-phosphate + acetyl-CoA = N-acetyl-alpha-D-glucosamine 1-phosphate + CoA + H(+). The catalysed reaction is N-acetyl-alpha-D-glucosamine 1-phosphate + UTP + H(+) = UDP-N-acetyl-alpha-D-glucosamine + diphosphate. The protein operates within nucleotide-sugar biosynthesis; UDP-N-acetyl-alpha-D-glucosamine biosynthesis; N-acetyl-alpha-D-glucosamine 1-phosphate from alpha-D-glucosamine 6-phosphate (route II): step 2/2. It functions in the pathway nucleotide-sugar biosynthesis; UDP-N-acetyl-alpha-D-glucosamine biosynthesis; UDP-N-acetyl-alpha-D-glucosamine from N-acetyl-alpha-D-glucosamine 1-phosphate: step 1/1. It participates in bacterial outer membrane biogenesis; LPS lipid A biosynthesis. Functionally, catalyzes the last two sequential reactions in the de novo biosynthetic pathway for UDP-N-acetylglucosamine (UDP-GlcNAc). The C-terminal domain catalyzes the transfer of acetyl group from acetyl coenzyme A to glucosamine-1-phosphate (GlcN-1-P) to produce N-acetylglucosamine-1-phosphate (GlcNAc-1-P), which is converted into UDP-GlcNAc by the transfer of uridine 5-monophosphate (from uridine 5-triphosphate), a reaction catalyzed by the N-terminal domain. This Gluconacetobacter diazotrophicus (strain ATCC 49037 / DSM 5601 / CCUG 37298 / CIP 103539 / LMG 7603 / PAl5) protein is Bifunctional protein GlmU.